The following is a 201-amino-acid chain: Pyridoxal 5'-phosphate synthase subunit PdxT (201 aa).

Residue 48–50 participates in L-glutamine binding; that stretch reads GES. Cysteine 80 functions as the Nucleophile in the catalytic mechanism. Residues arginine 109 and 137-138 contribute to the L-glutamine site; that span reads IR. Catalysis depends on charge relay system residues histidine 180 and glutamate 182.

This sequence belongs to the glutaminase PdxT/SNO family. As to quaternary structure, in the presence of PdxS, forms a dodecamer of heterodimers. Only shows activity in the heterodimer.

It catalyses the reaction aldehydo-D-ribose 5-phosphate + D-glyceraldehyde 3-phosphate + L-glutamine = pyridoxal 5'-phosphate + L-glutamate + phosphate + 3 H2O + H(+). It carries out the reaction L-glutamine + H2O = L-glutamate + NH4(+). The protein operates within cofactor biosynthesis; pyridoxal 5'-phosphate biosynthesis. In terms of biological role, catalyzes the hydrolysis of glutamine to glutamate and ammonia as part of the biosynthesis of pyridoxal 5'-phosphate. The resulting ammonia molecule is channeled to the active site of PdxS. This chain is Pyridoxal 5'-phosphate synthase subunit PdxT, found in Cutibacterium acnes (strain DSM 16379 / KPA171202) (Propionibacterium acnes).